Consider the following 529-residue polypeptide: MPSKGKDKKKGKSRGKDTKKLIKTDESVVDRAKANASLWEARLEITELSRIEYRDTSRTLAKSNEDLKKKQCKMEKDIMSVLSYLKKQDQEKDNMIEKLKQQLNETKEKAQEEKDKLEQKYTRQIDELEGQFHQKAKEIGMIHTELKAVRQFQRRKIQVERELDDLKENLRNTERIHQETLRRLESRFFEEKHRLKQEAEKKIIMLAERAHHEAVVQLNDAGRNVFKENVYLQKALAYHLKEAGGLQKNSQKLQESHALLLHQKEINDLLIKEKIMQLVQQRSQIQTLQKKVVNLETALGYMTKEFESEVLKLQQHAMIENQAGQVEIDKLQHLLQMKDREMNRVKKLAKNILDERTEVERFFLDALHQVKQQILISRKHYKQIAQAAFNLKMRAACAGRTEYPKIRTFDGREHSTNSVNQDLLEAEKWTHIEGNVDIGDLTWEQKEKVLRLLFAKMNGCPSRKYNQSSKPPVPDYVVSDSGETKEFGDESKLQDKIFITQQIPISDSSGKVVLPTIPKGPQESDTGTF.

Residues 1–13 (MPSKGKDKKKGKS) show a composition bias toward basic residues. The segment at 1–22 (MPSKGKDKKKGKSRGKDTKKLI) is disordered. Coiled coils occupy residues 55–198 (DTSR…LKQE) and 271–361 (IKEK…EVER). Positions 510–529 (GKVVLPTIPKGPQESDTGTF) are disordered.

This sequence belongs to the BBOF1 family. As to quaternary structure, interacts with MNS1 and ODF2.

The protein localises to the cytoplasm. It is found in the cytoskeleton. Its subcellular location is the cilium basal body. The protein resides in the flagellum axoneme. Its function is as follows. Plays an essential role in sperm motility and male fertility by stabilizing the sperm flagellar axonemal structure. May be required for the stability of ODF2 and MANS1 proteins. Dispensable for the assembly and function of motile cilia. The protein is Basal body-orientation factor 1 of Macaca fascicularis (Crab-eating macaque).